A 361-amino-acid polypeptide reads, in one-letter code: UDP-N-acetylglucosamine--N-acetylmuramyl-(pentapeptide) pyrophosphoryl-undecaprenol N-acetylglucosamine transferase (361 aa).

UDP-N-acetyl-alpha-D-glucosamine-binding positions include 12 to 14, N123, R166, S192, and Q293; that span reads TGG.

It belongs to the glycosyltransferase 28 family. MurG subfamily.

The protein resides in the cell inner membrane. It catalyses the reaction di-trans,octa-cis-undecaprenyl diphospho-N-acetyl-alpha-D-muramoyl-L-alanyl-D-glutamyl-meso-2,6-diaminopimeloyl-D-alanyl-D-alanine + UDP-N-acetyl-alpha-D-glucosamine = di-trans,octa-cis-undecaprenyl diphospho-[N-acetyl-alpha-D-glucosaminyl-(1-&gt;4)]-N-acetyl-alpha-D-muramoyl-L-alanyl-D-glutamyl-meso-2,6-diaminopimeloyl-D-alanyl-D-alanine + UDP + H(+). It functions in the pathway cell wall biogenesis; peptidoglycan biosynthesis. Functionally, cell wall formation. Catalyzes the transfer of a GlcNAc subunit on undecaprenyl-pyrophosphoryl-MurNAc-pentapeptide (lipid intermediate I) to form undecaprenyl-pyrophosphoryl-MurNAc-(pentapeptide)GlcNAc (lipid intermediate II). The chain is UDP-N-acetylglucosamine--N-acetylmuramyl-(pentapeptide) pyrophosphoryl-undecaprenol N-acetylglucosamine transferase from Caulobacter vibrioides (strain ATCC 19089 / CIP 103742 / CB 15) (Caulobacter crescentus).